The primary structure comprises 213 residues: Golgi SNAP receptor complex member 2 homolog memb-1 (213 aa).

The Cytoplasmic portion of the chain corresponds to 1–189 (MEALYQSTNF…QVIDRRVRED (189 aa)). Residues 190–210 (WILFVIGCIVCCIFMYAFYRF) traverse the membrane as a helical; Anchor for type IV membrane protein segment. At 211-213 (WRG) the chain is on the vesicular side.

It belongs to the GOSR2 family. Part of a unique SNARE complex.

Its subcellular location is the golgi apparatus. It is found in the cis-Golgi network membrane. The protein localises to the golgi apparatus membrane. It localises to the endoplasmic reticulum membrane. Involved in transport of proteins from the cis/medial-Golgi to the trans-Golgi network. This chain is Golgi SNAP receptor complex member 2 homolog memb-1, found in Caenorhabditis elegans.